A 358-amino-acid chain; its full sequence is Peptide chain release factor 1 (358 aa).

The residue at position 233 (Gln233) is an N5-methylglutamine.

The protein belongs to the prokaryotic/mitochondrial release factor family. Post-translationally, methylated by PrmC. Methylation increases the termination efficiency of RF1.

It is found in the cytoplasm. Peptide chain release factor 1 directs the termination of translation in response to the peptide chain termination codons UAG and UAA. The polypeptide is Peptide chain release factor 1 (Macrococcus caseolyticus (strain JCSC5402) (Macrococcoides caseolyticum)).